Reading from the N-terminus, the 98-residue chain is MQFTTTTLIAILSALAVASPIEPRQNATAQQERLCTSAIDTAMCCQTTLAGVINQTCTTPAITPINKQAFRAYCAAQGQDSSCCKTPLVGDGVICTPP.

Positions 1–18 (MQFTTTTLIAILSALAVA) are cleaved as a signal peptide. Asn-26 and Asn-54 each carry an N-linked (GlcNAc...) asparagine glycan. Cystine bridges form between Cys-35/Cys-83, Cys-44/Cys-74, Cys-45/Cys-57, and Cys-84/Cys-95.

The protein belongs to the cerato-ulmin hydrophobin family.

It is found in the secreted. The protein resides in the cell wall. In terms of biological role, aerial growth, conidiation, and dispersal of filamentous fungi in the environment rely upon a capability of their secreting small amphipathic proteins called hydrophobins (HPBs) with low sequence identity. Class I can self-assemble into an outermost layer of rodlet bundles on aerial cell surfaces, conferring cellular hydrophobicity that supports fungal growth, development and dispersal; whereas Class II form highly ordered films at water-air interfaces through intermolecular interactions but contribute nothing to the rodlet structure. In Botryotinia fuckeliana, hydrophobins are not involved in conferring surface hydrophobicity to conidia and aerial hyphae and their function in sclerotia and fruiting bodies remains to be investigated. The protein is Class II hydrophobin 3 of Botryotinia fuckeliana (strain B05.10) (Noble rot fungus).